We begin with the raw amino-acid sequence, 399 residues long: Lysosomal acid lipase/cholesteryl ester hydrolase (399 aa).

The signal sequence occupies residues 1–27 (MKMRFLGLVVCLVLWTLHSEASGGKLT). Residues 28-76 (AVNPETNMNVSEIISYWGFPSEEYLVETEDGYILCLNRIPHGRKNHSDK) constitute a propeptide, removed in mature form. 4 N-linked (GlcNAc...) asparagine glycosylation sites follow: Asn36, Asn72, Asn101, and Asn161. An AB hydrolase-1 domain is found at 80–380 (PVVFLQHGLL…EWEHLDFIWG (301 aa)). Ser174 serves as the catalytic Charge relay system. N-linked (GlcNAc...) asparagine glycosylation is found at Asn273 and Asn321. The active-site Charge relay system is His374.

It belongs to the AB hydrolase superfamily. Lipase family. Monomer. Glycosylation is not essential for catalytic activity.

Its subcellular location is the lysosome. The catalysed reaction is a sterol ester + H2O = a sterol + a fatty acid + H(+). It catalyses the reaction cholesteryl (9Z-octadecenoate) + H2O = cholesterol + (9Z)-octadecenoate + H(+). The enzyme catalyses a triacylglycerol + H2O = a 1,2-diacylglycerol + a fatty acid + H(+). It carries out the reaction 1,2-di-(9Z-octadecenoyl)-glycerol + (9Z)-octadecenoate + H(+) = 1,2,3-tri-(9Z-octadecenoyl)-glycerol + H2O. The catalysed reaction is a 1,2-diacylglycerol + H2O = a 1-acylglycerol + a fatty acid + H(+). It catalyses the reaction 1,2-di-(9Z-octadecenoyl)-glycerol + H2O = 1-(9Z-octadecenoyl)-glycerol + (9Z)-octadecenoate + H(+). The enzyme catalyses a 1,3-diacylglycerol + H2O = a 1-acylglycerol + a fatty acid + H(+). It carries out the reaction 1,3-di-(9Z-octadecenoyl)-glycerol + H2O = 1-(9Z-octadecenoyl)-glycerol + (9Z)-octadecenoate + H(+). Its function is as follows. Catalyzes the deacylation of cholesteryl ester core lipids of endocytosed low density lipoproteins to generate free fatty acids and cholesterol. Hydrolyzes triglycerides (1,2,3-triacylglycerol) and diglycerides (such as 1,2-diacylglycerol and 1,3-diacylglycerol) with preference for the acyl moieties at the sn-1 or sn-3 positions. The sequence is that of Lysosomal acid lipase/cholesteryl ester hydrolase (LIPA) from Macaca fascicularis (Crab-eating macaque).